The following is a 515-amino-acid chain: Bifunctional purine biosynthesis protein PurH (515 aa).

The region spanning methionine 1–valine 145 is the MGS-like domain.

The protein belongs to the PurH family.

The catalysed reaction is (6R)-10-formyltetrahydrofolate + 5-amino-1-(5-phospho-beta-D-ribosyl)imidazole-4-carboxamide = 5-formamido-1-(5-phospho-D-ribosyl)imidazole-4-carboxamide + (6S)-5,6,7,8-tetrahydrofolate. The enzyme catalyses IMP + H2O = 5-formamido-1-(5-phospho-D-ribosyl)imidazole-4-carboxamide. Its pathway is purine metabolism; IMP biosynthesis via de novo pathway; 5-formamido-1-(5-phospho-D-ribosyl)imidazole-4-carboxamide from 5-amino-1-(5-phospho-D-ribosyl)imidazole-4-carboxamide (10-formyl THF route): step 1/1. It functions in the pathway purine metabolism; IMP biosynthesis via de novo pathway; IMP from 5-formamido-1-(5-phospho-D-ribosyl)imidazole-4-carboxamide: step 1/1. The sequence is that of Bifunctional purine biosynthesis protein PurH from Streptococcus gordonii (strain Challis / ATCC 35105 / BCRC 15272 / CH1 / DL1 / V288).